A 133-amino-acid chain; its full sequence is NAD(P)H-quinone oxidoreductase subunit 3 (133 aa).

The next 3 membrane-spanning stretches (helical) occupy residues Tyr-22–Leu-44, Met-77–Val-97, and Leu-102–Ala-122.

The protein belongs to the complex I subunit 3 family. NDH-1 can be composed of about 15 different subunits; different subcomplexes with different compositions have been identified which probably have different functions.

The protein localises to the cellular thylakoid membrane. It catalyses the reaction a plastoquinone + NADH + (n+1) H(+)(in) = a plastoquinol + NAD(+) + n H(+)(out). It carries out the reaction a plastoquinone + NADPH + (n+1) H(+)(in) = a plastoquinol + NADP(+) + n H(+)(out). Functionally, NDH-1 shuttles electrons from an unknown electron donor, via FMN and iron-sulfur (Fe-S) centers, to quinones in the respiratory and/or the photosynthetic chain. The immediate electron acceptor for the enzyme in this species is believed to be plastoquinone. Couples the redox reaction to proton translocation, and thus conserves the redox energy in a proton gradient. Cyanobacterial NDH-1 also plays a role in inorganic carbon-concentration. The chain is NAD(P)H-quinone oxidoreductase subunit 3 from Synechococcus sp. (strain ATCC 27144 / PCC 6301 / SAUG 1402/1) (Anacystis nidulans).